The following is a 1371-amino-acid chain: Pleckstrin homology-like domain family B member 1 (1371 aa).

A Phosphoserine modification is found at serine 51. Positions 64–125 constitute an FHA domain; the sequence is TVIGSAARDI…LTQGCMLCLG (62 aa). Arginine 131 is modified (asymmetric dimethylarginine). The interval 153 to 182 is disordered; sequence GPTYNPGSAESESLVNGNHTAQPATRAPSA. Residues 157–175 are compositionally biased toward polar residues; it reads NPGSAESESLVNGNHTAQP. Phosphoserine occurs at positions 192, 220, and 223. 2 disordered regions span residues 211–336 and 368–573; these read AAGK…TDSP and PSSG…RVPI. 2 stretches are compositionally biased toward low complexity: residues 252 to 273 and 296 to 312; these read SPAF…HSPS and LQPP…SDSP. 2 positions are modified to phosphoserine: serine 325 and serine 335. A compositionally biased stretch (polar residues) spans 368–377; that stretch reads PSSGARSQPA. Residues serine 382, serine 405, serine 431, serine 445, serine 463, serine 472, serine 491, and serine 503 each carry the phosphoserine modification. Residues 464-477 are compositionally biased toward low complexity; it reads PSLSRRALSPLPAR. Basic and acidic residues predominate over residues 483-493; the sequence is KLSREVAESPR. Position 514 is an omega-N-methylarginine (arginine 514). Phosphoserine occurs at positions 520 and 522. Phosphothreonine is present on threonine 524. 8 positions are modified to phosphoserine: serine 535, serine 541, serine 553, serine 557, serine 565, serine 580, serine 585, and serine 683. Over residues 547–559 the composition is skewed to polar residues; that stretch reads GSLTGASPRQSPR. Disordered regions lie at residues 672–714 and 942–1020; these read ESGG…GAKH and GLAA…QNGT. 2 stretches are compositionally biased toward basic and acidic residues: residues 682–696 and 703–714; these read ESME…KEEC and QQEHEDAPGAKH. Residues 688–798 are a coiled coil; that stretch reads DEENLKEECS…ETGIQKDRDK (111 aa). A phosphoserine mark is found at serine 976 and serine 1022. Residues 976–997 show a composition bias toward low complexity; that stretch reads SPLPRTRSGPLPSSSGSSSSSS. Positions 1124-1143 are disordered; it reads SMETSISTGGNSACSPDNMS. Positions 1150 to 1216 form a coiled coil; that stretch reads MGKIEEMEKM…QQLVEKEVKL (67 aa). The 104-residue stretch at 1261–1364 folds into the PH domain; the sequence is SKVCRGYLIK…WMDVIVTGAE (104 aa).

The sequence is that of Pleckstrin homology-like domain family B member 1 (Phldb1) from Mus musculus (Mouse).